The primary structure comprises 243 residues: Ubiquinone/menaquinone biosynthesis C-methyltransferase UbiE (243 aa).

Residues T69, D90, and 116-117 (DA) contribute to the S-adenosyl-L-methionine site.

It belongs to the class I-like SAM-binding methyltransferase superfamily. MenG/UbiE family.

The catalysed reaction is a 2-demethylmenaquinol + S-adenosyl-L-methionine = a menaquinol + S-adenosyl-L-homocysteine + H(+). It catalyses the reaction a 2-methoxy-6-(all-trans-polyprenyl)benzene-1,4-diol + S-adenosyl-L-methionine = a 5-methoxy-2-methyl-3-(all-trans-polyprenyl)benzene-1,4-diol + S-adenosyl-L-homocysteine + H(+). Its pathway is quinol/quinone metabolism; menaquinone biosynthesis; menaquinol from 1,4-dihydroxy-2-naphthoate: step 2/2. It functions in the pathway cofactor biosynthesis; ubiquinone biosynthesis. Functionally, methyltransferase required for the conversion of demethylmenaquinol (DMKH2) to menaquinol (MKH2) and the conversion of 2-polyprenyl-6-methoxy-1,4-benzoquinol (DDMQH2) to 2-polyprenyl-3-methyl-6-methoxy-1,4-benzoquinol (DMQH2). This is Ubiquinone/menaquinone biosynthesis C-methyltransferase UbiE from Cupriavidus necator (strain ATCC 17699 / DSM 428 / KCTC 22496 / NCIMB 10442 / H16 / Stanier 337) (Ralstonia eutropha).